Reading from the N-terminus, the 166-residue chain is Monodehydroascorbate reductase, fruit isozyme (166 aa).

This sequence belongs to the FAD-dependent oxidoreductase family. FAD is required as a cofactor. The N-terminus is blocked.

The enzyme catalyses 2 monodehydro-L-ascorbate radical + NADH + H(+) = 2 L-ascorbate + NAD(+). Catalyzes the conversion of monodehydroascorbate to ascorbate, oxidizing NADH in the process. The polypeptide is Monodehydroascorbate reductase, fruit isozyme (Cucumis sativus (Cucumber)).